A 325-amino-acid chain; its full sequence is Ubiquitin thioesterase OTU1 (325 aa).

Residues 7–86 (RIRSKTGVEN…NVSSISSNPG (80 aa)) are UBX-like. The 124-residue stretch at 123 to 246 (ATRRVTDDDN…GIHYDALSIC (124 aa)) folds into the OTU domain. The interval 128 to 134 (TDDDNSC) is cys-loop. The active site involves D131. The active-site Nucleophile is the C134. The variable-loop stretch occupies residues 185–195 (IQNPKNWGGAI). Residues 235–239 (YDGIH) form a his-loop region. Position 238 (I238) interacts with substrate. H239 is an active-site residue. Residues 265-270 (KDSLAK) form an S2 site region. Residues 292–316 (LICLNCNKTLKGEKEAAIHASTTGH) form a C2H2-type zinc finger. The active site involves H316.

The protein localises to the cytoplasm. The enzyme catalyses Thiol-dependent hydrolysis of ester, thioester, amide, peptide and isopeptide bonds formed by the C-terminal Gly of ubiquitin (a 76-residue protein attached to proteins as an intracellular targeting signal).. Its function is as follows. Hydrolase that can remove conjugated ubiquitin from proteins and may therefore play an important regulatory role at the level of protein turnover by preventing degradation. In Dictyostelium discoideum (Social amoeba), this protein is Ubiquitin thioesterase OTU1 (yod1).